Here is a 74-residue protein sequence, read N- to C-terminus: RNA-binding protein Hfq (74 aa).

A Sm domain is found at 9 to 69; that stretch reads DQFLNQLRKE…ISTFMPQKNV (61 aa).

Belongs to the Hfq family. As to quaternary structure, homohexamer.

In terms of biological role, RNA chaperone that binds small regulatory RNA (sRNAs) and mRNAs to facilitate mRNA translational regulation in response to envelope stress, environmental stress and changes in metabolite concentrations. Also binds with high specificity to tRNAs. The protein is RNA-binding protein Hfq of Bacillus cytotoxicus (strain DSM 22905 / CIP 110041 / 391-98 / NVH 391-98).